The following is a 212-amino-acid chain: Dihydrophenazinedicarboxylate synthase (212 aa).

Serine 8 contacts substrate. Residues 63-66 (RVIA) and 78-79 (CT) each bind FMN. Substrate is bound at residue histidine 80. Residues 84 to 85 (RK) and glutamine 107 each bind FMN. Substrate-binding residues include arginine 129 and serine 137. FMN contacts are provided by residues 142–143 (QS) and arginine 195.

The protein belongs to the pyridoxamine 5'-phosphate oxidase family. It depends on FMN as a cofactor.

The catalysed reaction is (1R,6R)-1,4,5,5a,6,9-hexahydrophenazine-1,6-dicarboxylate + O2 = (1R,10aS)-1,4,10,10a-tetrahydrophenazine-1,6-dicarboxylate + H2O2. It catalyses the reaction (1R,10aS)-1,4,10,10a-tetrahydrophenazine-1,6-dicarboxylate + O2 = (5aS)-5,5a-dihydrophenazine-1,6-dicarboxylate + H2O2. It carries out the reaction (1R,10aS)-1,4,10,10a-tetrahydrophenazine-1-carboxylate + O2 = (10aS)-10,10a-dihydrophenazine-1-carboxylate + H2O2. The enzyme catalyses (1R)-1,4,5,10-tetrahydrophenazine-1-carboxylate + O2 = (10aS)-10,10a-dihydrophenazine-1-carboxylate + H2O2. The protein operates within antibiotic biosynthesis; phenazine biosynthesis. Its function is as follows. Involved in the biosynthesis of the antibiotic phenazine, a nitrogen-containing heterocyclic molecule having important roles in virulence, competition and biological control. Catalyzes several oxidations in the terminal steps of core phenazine biosynthesis. It oxidizes both hexahydrophenazine-1,6-dicarboxylic acid (HHPDC) and tetrahydrophenazine-1-carboxylic acid (THPCA) and thereby contributes to the generation of both phenazine-1,6-dicarboxylic acid (PDC) and phenazine-1-carboxylic acid (PCA). It synthesizes phenazines in their reduced form, which are the likely end products in vivo. This Burkholderia lata (strain ATCC 17760 / DSM 23089 / LMG 22485 / NCIMB 9086 / R18194 / 383) protein is Dihydrophenazinedicarboxylate synthase.